The primary structure comprises 164 residues: C-phycoerythrin alpha chain (164 aa).

(2R,3E)-phycoerythrobilin-binding residues include cysteine 82 and cysteine 139.

Belongs to the phycobiliprotein family. In terms of assembly, heterodimer of an alpha and a beta chain. Post-translationally, contains two covalently linked bilin chromophores.

The protein resides in the cellular thylakoid membrane. In terms of biological role, light-harvesting photosynthetic bile pigment-protein from the phycobiliprotein complex. This Microchaete diplosiphon (Fremyella diplosiphon) protein is C-phycoerythrin alpha chain (cpeA).